We begin with the raw amino-acid sequence, 81 residues long: Anaphase-promoting complex subunit emb-1 (81 aa).

The APC/C is probably composed of at least 12 subunits: apc-2, apc-10, apc-11, cdc-26, emb-1, emb-27, emb-30, mat-1, mat-2, mat-3, such-1 and gfi-3. Expressed in germ cells.

The protein operates within protein modification; protein ubiquitination. Probable component of the anaphase promoting complex/cyclosome (APC/C), a cell cycle-regulated E3 ubiquitin ligase that controls progression through mitosis and the G1 phase of the cell cycle. The APC/C complex acts by mediating ubiquitination and subsequent degradation of target proteins. Developmental role in early embryogenesis and the metaphase to anaphase transition in meiosis and mitosis. May be required for germline proliferation. Required for male tail development and hermaphrodite vulva formation. The protein is Anaphase-promoting complex subunit emb-1 of Caenorhabditis elegans.